Reading from the N-terminus, the 247-residue chain is Segregation and condensation protein A (247 aa).

The protein belongs to the ScpA family. As to quaternary structure, component of a cohesin-like complex composed of ScpA, ScpB and the Smc homodimer, in which ScpA and ScpB bind to the head domain of Smc. The presence of the three proteins is required for the association of the complex with DNA.

The protein resides in the cytoplasm. Its function is as follows. Participates in chromosomal partition during cell division. May act via the formation of a condensin-like complex containing Smc and ScpB that pull DNA away from mid-cell into both cell halves. This is Segregation and condensation protein A from Bacillus anthracis (strain A0248).